We begin with the raw amino-acid sequence, 488 residues long: Glutamyl-tRNA(Gln) amidotransferase subunit A (488 aa).

Catalysis depends on charge relay system residues Lys-77 and Ser-152. The active-site Acyl-ester intermediate is Ser-176.

It belongs to the amidase family. GatA subfamily. As to quaternary structure, heterotrimer of A, B and C subunits.

It carries out the reaction L-glutamyl-tRNA(Gln) + L-glutamine + ATP + H2O = L-glutaminyl-tRNA(Gln) + L-glutamate + ADP + phosphate + H(+). Allows the formation of correctly charged Gln-tRNA(Gln) through the transamidation of misacylated Glu-tRNA(Gln) in organisms which lack glutaminyl-tRNA synthetase. The reaction takes place in the presence of glutamine and ATP through an activated gamma-phospho-Glu-tRNA(Gln). The sequence is that of Glutamyl-tRNA(Gln) amidotransferase subunit A from Latilactobacillus sakei subsp. sakei (strain 23K) (Lactobacillus sakei subsp. sakei).